The primary structure comprises 473 residues: Photosystem II CP43 reaction center protein (473 aa).

Positions 1 to 14 are excised as a propeptide; it reads MKTLYSLRRFYHVE. Position 15 is an N-acetylthreonine (Thr15). Thr15 is subject to Phosphothreonine. 5 helical membrane-spanning segments follow: residues 69–93, 134–155, 178–200, 255–275, and 291–312; these read LFEV…PHLA, LLGP…KDRN, KALY…RKIT, KPFA…LSYS, and WFNN…ASQA. Glu367 serves as a coordination point for [CaMn4O5] cluster. The chain crosses the membrane as a helical span at residues 447-471; the sequence is RARAAAAGFEKGIDRDFEPVLSMTP.

Belongs to the PsbB/PsbC family. PsbC subfamily. PSII is composed of 1 copy each of membrane proteins PsbA, PsbB, PsbC, PsbD, PsbE, PsbF, PsbH, PsbI, PsbJ, PsbK, PsbL, PsbM, PsbT, PsbX, PsbY, PsbZ, Psb30/Ycf12, at least 3 peripheral proteins of the oxygen-evolving complex and a large number of cofactors. It forms dimeric complexes. Binds multiple chlorophylls and provides some of the ligands for the Ca-4Mn-5O cluster of the oxygen-evolving complex. It may also provide a ligand for a Cl- that is required for oxygen evolution. PSII binds additional chlorophylls, carotenoids and specific lipids. serves as cofactor.

It localises to the plastid. The protein resides in the chloroplast thylakoid membrane. One of the components of the core complex of photosystem II (PSII). It binds chlorophyll and helps catalyze the primary light-induced photochemical processes of PSII. PSII is a light-driven water:plastoquinone oxidoreductase, using light energy to abstract electrons from H(2)O, generating O(2) and a proton gradient subsequently used for ATP formation. The chain is Photosystem II CP43 reaction center protein from Chloranthus spicatus (Chulantree).